A 177-amino-acid chain; its full sequence is Large ribosomal subunit protein uL6 (177 aa).

Belongs to the universal ribosomal protein uL6 family. Part of the 50S ribosomal subunit.

In terms of biological role, this protein binds to the 23S rRNA, and is important in its secondary structure. It is located near the subunit interface in the base of the L7/L12 stalk, and near the tRNA binding site of the peptidyltransferase center. This Aeromonas salmonicida (strain A449) protein is Large ribosomal subunit protein uL6.